Consider the following 224-residue polypeptide: PKHD-type hydroxylase Shewmr4_3244 (224 aa).

The 99-residue stretch at Gln78–Ser176 folds into the Fe2OG dioxygenase domain. Residues His96, Asp98, and His157 each contribute to the Fe cation site. Residue Arg167 participates in 2-oxoglutarate binding.

The cofactor is Fe(2+). Requires L-ascorbate as cofactor.

This is PKHD-type hydroxylase Shewmr4_3244 from Shewanella sp. (strain MR-4).